Reading from the N-terminus, the 37-residue chain is M-oxotoxin-Ot2d (37 aa).

As to expression, expressed by the venom gland.

It localises to the secreted. Its function is as follows. Disrupts biological membranes, particularly those rich in phosphocholine. Has antimicrobial activity against Gram-negative bacterium E.coli, Gram-positive bacteria B.subtilis and S.aureus, and hemolytic activity against sheep, pig and guinea pig red blood cells. Has insecticidal activity against S.frugiperda ovarian cells by opening non-selective ion channels. Enhances the insecticidal activity of spider venom neurotoxic peptides. The polypeptide is M-oxotoxin-Ot2d (Oxyopes takobius (Lynx spider)).